Here is a 487-residue protein sequence, read N- to C-terminus: MKKQKGYLVFDIGTGNARVAVVSVTGSVLTVEREDIEYSTETLYPDSRYFSPQVLWKQVMNLAKRALSRSCDIDIIGLTSTSQRQGIVLIDQNGNPFLGLPNIDNRGREWEAGIPDWEEIYSSTGRLPTALFSALKLYGLKQRQPSLWEKTASFTSISDWVTYQLSGILTYEPSQATETLLFDVKQNTWSEEMCDIFGFSPSILPPLVRAGTAIGTIANEYASELGLSINAKVIAGGGDTQLAVKSTGAGLEDIVIVSGTTTPITKITEDHGDTKHKAWLNCHTDQGHWLVETNPGITGLNYQKLKQIFYPNETYEVMEEEISALAKEDHACVAALGSYLSAEKNALTRGGFLFDAPLSAHLKRAHFVRAALEEIAFSIKWNFDILTEVTPFERDYVWVCGGGFQSKALTQYIADLLQKKVYVQEGYHQASVVGAAVICNETFQLTEEMSANVRVIEPKDCQIELALYEEWKQTQRFFSGSESKVLI.

It belongs to the FGGY kinase family.

The sequence is that of Putative sugar kinase YoaC (yoaC) from Bacillus subtilis (strain 168).